Here is a 256-residue protein sequence, read N- to C-terminus: Trans-aconitate 2-methyltransferase (256 aa).

The protein belongs to the methyltransferase superfamily. Tam family.

The protein resides in the cytoplasm. The catalysed reaction is trans-aconitate + S-adenosyl-L-methionine = (E)-3-(methoxycarbonyl)pent-2-enedioate + S-adenosyl-L-homocysteine. Its function is as follows. Catalyzes the S-adenosylmethionine monomethyl esterification of trans-aconitate. The polypeptide is Trans-aconitate 2-methyltransferase (Afipia carboxidovorans (strain ATCC 49405 / DSM 1227 / KCTC 32145 / OM5) (Oligotropha carboxidovorans)).